A 156-amino-acid chain; its full sequence is Ribosomal RNA large subunit methyltransferase H (156 aa).

S-adenosyl-L-methionine contacts are provided by residues L73, G104, and I123–L128.

This sequence belongs to the RNA methyltransferase RlmH family. In terms of assembly, homodimer.

It localises to the cytoplasm. The catalysed reaction is pseudouridine(1915) in 23S rRNA + S-adenosyl-L-methionine = N(3)-methylpseudouridine(1915) in 23S rRNA + S-adenosyl-L-homocysteine + H(+). Functionally, specifically methylates the pseudouridine at position 1915 (m3Psi1915) in 23S rRNA. In Burkholderia vietnamiensis (strain G4 / LMG 22486) (Burkholderia cepacia (strain R1808)), this protein is Ribosomal RNA large subunit methyltransferase H.